Here is a 140-residue protein sequence, read N- to C-terminus: Ribosome-binding factor A (140 aa).

Belongs to the RbfA family. As to quaternary structure, monomer. Binds 30S ribosomal subunits, but not 50S ribosomal subunits or 70S ribosomes.

Its subcellular location is the cytoplasm. Its function is as follows. One of several proteins that assist in the late maturation steps of the functional core of the 30S ribosomal subunit. Associates with free 30S ribosomal subunits (but not with 30S subunits that are part of 70S ribosomes or polysomes). Required for efficient processing of 16S rRNA. May interact with the 5'-terminal helix region of 16S rRNA. This chain is Ribosome-binding factor A, found in Cereibacter sphaeroides (strain ATCC 17023 / DSM 158 / JCM 6121 / CCUG 31486 / LMG 2827 / NBRC 12203 / NCIMB 8253 / ATH 2.4.1.) (Rhodobacter sphaeroides).